Consider the following 259-residue polypeptide: Polycomb group RING finger protein 1 (259 aa).

Position 2 is an N-acetylalanine (alanine 2). Serine 3 bears the Phosphoserine mark. Lysine 24 participates in a covalent cross-link: Glycyl lysine isopeptide (Lys-Gly) (interchain with G-Cter in SUMO2). Residues 47-86 (CCLCAGYFVDATTITECLHTFCKSCIVKYLQTSKYCPMCN) form an RING-type zinc finger. Residues 86–247 (NIKIHETQPL…LSHWFGKPSP (162 aa)) are necessary for repressor activity. A Glycyl lysine isopeptide (Lys-Gly) (interchain with G-Cter in SUMO2) cross-link involves residue lysine 88. Residues 150–255 (LPFSSFDHSK…SPLLLQYSVK (106 aa)) form a required for the interaction with the KDM2B-SKP1 heterodimeric complex region. The RING-finger and WD40-associated ubiquitin-like domain (RAWUL); sufficient for interaction with BCOR and BCORL1 stretch occupies residues 167-255 (EQLSLCLERL…SPLLLQYSVK (89 aa)).

As to quaternary structure, interacts with BCORL1, forming heterodimers. The PCGF1-BCORL1 heterodimeric complex interacts with the KDM2B-SKP1 heterodimeric complex to form a homotetrameric polycomb repression complex 1 (PRC1.1). Component of the repressive BCOR complex containing a Polycomb group subcomplex at least composed of RYBP, RING1 and RNF2/RING2. Specifically interacts with BCOR, RING1 and RNF2/RING2. Component of a PRC1-like complex. Interacts with CBX6, CBX7 and CBX8. Interacts with DPPA4, NANOG, POU5F1 and RYBP.

The protein localises to the nucleus. Its function is as follows. Component of the Polycomb group (PcG) multiprotein BCOR complex, a complex required to maintain the transcriptionally repressive state of some genes, such as BCL6 and the cyclin-dependent kinase inhibitor, CDKN1A. Transcriptional repressor that may be targeted to the DNA by BCL6; this transcription repressor activity may be related to PKC signaling pathway. Represses CDKN1A expression by binding to its promoter, and this repression is dependent on the retinoic acid response element (RARE element). Promotes cell cycle progression and enhances cell proliferation as well. May have a positive role in tumor cell growth by down-regulating CDKN1A. Component of a Polycomb group (PcG) multiprotein PRC1-like complex, a complex class required to maintain the transcriptionally repressive state of many genes, including Hox genes, throughout development. PcG PRC1 complex acts via chromatin remodeling and modification of histones; it mediates monoubiquitination of histone H2A 'Lys-119', rendering chromatin heritably changed in its expressibility. Within the PRC1-like complex, regulates RNF2 ubiquitin ligase activity. Regulates the expression of DPPA4 and NANOG in the NT2 embryonic carcinoma cells. The sequence is that of Polycomb group RING finger protein 1 (PCGF1) from Bos taurus (Bovine).